The primary structure comprises 147 residues: UPF0178 protein VIBHAR_03247 (147 aa).

Belongs to the UPF0178 family.

The sequence is that of UPF0178 protein VIBHAR_03247 from Vibrio campbellii (strain ATCC BAA-1116).